The following is a 367-amino-acid chain: Pre-small/secreted glycoprotein (367 aa).

The first 33 residues, 1 to 33 (MGSGYQLLQLPRERFRKTSFLVWVIILFQRAIS), serve as a signal peptide directing secretion. Asparagine 41 is a glycosylation site (N-linked (GlcNAc...) asparagine; by host). Disulfide bonds link cysteine 109–cysteine 136 and cysteine 122–cysteine 148. Residues asparagine 205, asparagine 229, asparagine 239, asparagine 258, and asparagine 269 are each glycosylated (N-linked (GlcNAc...) asparagine; by host).

Belongs to the filoviruses glycoprotein family. Homodimer; disulfide-linked. The homodimers are linked by two disulfide bonds in a parallel orientation. As to quaternary structure, monomer. In terms of processing, this precursor is processed into mature sGP and delta-peptide by host furin or furin-like proteases. The cleavage site corresponds to the furin optimal cleavage sequence [KR]-X-[KR]-R. Post-translationally, N-glycosylated. O-glycosylated.

It localises to the secreted. Functionally, seems to possess an anti-inflammatory activity as it can reverse the barrier-decreasing effects of TNF alpha. Might therefore contribute to the lack of inflammatory reaction seen during infection in spite the of extensive necrosis and massive virus production. Does not seem to be involved in activation of primary macrophages. Does not seem to interact specifically with neutrophils. In terms of biological role, viroporin that permeabilizes mammalian cell plasma membranes. It acts by altering permeation of ionic compounds and small molecules. This activity may lead to viral enterotoxic activity. This is Pre-small/secreted glycoprotein (GP) from Epomops franqueti (Franquet's epauletted fruit bat).